The sequence spans 257 residues: UPF0246 protein BT_3869 (257 aa).

The protein belongs to the UPF0246 family.

The sequence is that of UPF0246 protein BT_3869 from Bacteroides thetaiotaomicron (strain ATCC 29148 / DSM 2079 / JCM 5827 / CCUG 10774 / NCTC 10582 / VPI-5482 / E50).